Reading from the N-terminus, the 211-residue chain is ATP phosphoribosyltransferase (211 aa).

It belongs to the ATP phosphoribosyltransferase family. Short subfamily. As to quaternary structure, heteromultimer composed of HisG and HisZ subunits.

The protein resides in the cytoplasm. It carries out the reaction 1-(5-phospho-beta-D-ribosyl)-ATP + diphosphate = 5-phospho-alpha-D-ribose 1-diphosphate + ATP. It participates in amino-acid biosynthesis; L-histidine biosynthesis; L-histidine from 5-phospho-alpha-D-ribose 1-diphosphate: step 1/9. In terms of biological role, catalyzes the condensation of ATP and 5-phosphoribose 1-diphosphate to form N'-(5'-phosphoribosyl)-ATP (PR-ATP). Has a crucial role in the pathway because the rate of histidine biosynthesis seems to be controlled primarily by regulation of HisG enzymatic activity. The chain is ATP phosphoribosyltransferase from Lacticaseibacillus paracasei (strain ATCC 334 / BCRC 17002 / CCUG 31169 / CIP 107868 / KCTC 3260 / NRRL B-441) (Lactobacillus paracasei).